Consider the following 479-residue polypeptide: UDP-N-acetylmuramate--L-alanine ligase (479 aa).

124-130 serves as a coordination point for ATP; sequence GSHGKTT.

The protein belongs to the MurCDEF family.

Its subcellular location is the cytoplasm. The enzyme catalyses UDP-N-acetyl-alpha-D-muramate + L-alanine + ATP = UDP-N-acetyl-alpha-D-muramoyl-L-alanine + ADP + phosphate + H(+). It functions in the pathway cell wall biogenesis; peptidoglycan biosynthesis. Cell wall formation. This Synechococcus sp. (strain RCC307) protein is UDP-N-acetylmuramate--L-alanine ligase.